We begin with the raw amino-acid sequence, 78 residues long: Acyl carrier protein AcpP (78 aa).

A Carrier domain is found at 2–77; sequence SDIAERVKKI…DAVKFIEKAQ (76 aa). Position 37 is an O-(pantetheine 4'-phosphoryl)serine (S37).

It belongs to the acyl carrier protein (ACP) family. 4'-phosphopantetheine is transferred from CoA to a specific serine of apo-ACP by AcpS. This modification is essential for activity because fatty acids are bound in thioester linkage to the sulfhydryl of the prosthetic group.

Its subcellular location is the cytoplasm. It functions in the pathway lipid metabolism; fatty acid biosynthesis. Functionally, carrier of the growing fatty acid chain in fatty acid biosynthesis. The protein is Acyl carrier protein AcpP of Agrobacterium fabrum (strain C58 / ATCC 33970) (Agrobacterium tumefaciens (strain C58)).